The following is a 68-amino-acid chain: Large ribosomal subunit protein bL31 (68 aa).

The Zn(2+) site is built by cysteine 16, cysteine 18, cysteine 38, and cysteine 41.

Belongs to the bacterial ribosomal protein bL31 family. Type A subfamily. As to quaternary structure, part of the 50S ribosomal subunit. The cofactor is Zn(2+).

Functionally, binds the 23S rRNA. This Thiobacillus denitrificans (strain ATCC 25259 / T1) protein is Large ribosomal subunit protein bL31.